Reading from the N-terminus, the 538-residue chain is Carboxypeptidase 2 (538 aa).

An N-terminal signal peptide occupies residues Met1–Ala21. Asn46 is a glycosylation site (N-linked (GlcNAc...) asparagine). The disordered stretch occupies residues Pro53–Glu76. The 281-residue stretch at Gly71 to Ala351 folds into the Peptidase M14 domain. Zn(2+)-binding residues include His136, Glu139, and His224. The active-site Proton donor/acceptor is the Glu322. N-linked (GlcNAc...) asparagine glycosylation is found at Asn393 and Asn459.

This sequence belongs to the peptidase M14 family. Requires Zn(2+) as cofactor.

It localises to the secreted. Its function is as follows. Extracellular metalloprotease that contributes to pathogenicity. The protein is Carboxypeptidase 2 (MCPB) of Trichophyton equinum (Horse ringworm fungus).